The sequence spans 207 residues: Ribosome maturation factor RimM (207 aa).

In terms of domain architecture, PRC barrel spans 130–207 (EDEFYWVDLI…RIVVDWGLDY (78 aa)).

This sequence belongs to the RimM family. In terms of assembly, binds ribosomal protein uS19.

It localises to the cytoplasm. In terms of biological role, an accessory protein needed during the final step in the assembly of 30S ribosomal subunit, possibly for assembly of the head region. Essential for efficient processing of 16S rRNA. May be needed both before and after RbfA during the maturation of 16S rRNA. It has affinity for free ribosomal 30S subunits but not for 70S ribosomes. This Cupriavidus taiwanensis (strain DSM 17343 / BCRC 17206 / CCUG 44338 / CIP 107171 / LMG 19424 / R1) (Ralstonia taiwanensis (strain LMG 19424)) protein is Ribosome maturation factor RimM.